A 603-amino-acid polypeptide reads, in one-letter code: UvrABC system protein C (603 aa).

The region spanning 15-92 is the GIY-YIG domain; it reads DQPGCYLMKD…IKKHDPRFNI (78 aa). Residues 197-232 enclose the UVR domain; it reads KTVKNDLMKKMQEAAENMEFEKAGEFRDQINAIETT.

Belongs to the UvrC family. In terms of assembly, interacts with UvrB in an incision complex.

It is found in the cytoplasm. In terms of biological role, the UvrABC repair system catalyzes the recognition and processing of DNA lesions. UvrC both incises the 5' and 3' sides of the lesion. The N-terminal half is responsible for the 3' incision and the C-terminal half is responsible for the 5' incision. This chain is UvrABC system protein C, found in Listeria innocua serovar 6a (strain ATCC BAA-680 / CLIP 11262).